Here is a 480-residue protein sequence, read N- to C-terminus: Ftsk domain-containing protein YdcQ (480 aa).

The next 2 membrane-spanning stretches (helical) occupy residues 25-45 and 71-91; these read VKLA…FLFW and SVLC…FLLF. In terms of domain architecture, FtsK spans 217–399; it reads MKHISWQFDK…LGLMSDTGYG (183 aa). 234-241 is a binding site for ATP; that stretch reads GGTGGGKT.

It localises to the cell membrane. The chain is Ftsk domain-containing protein YdcQ (ydcQ) from Bacillus subtilis (strain 168).